Here is a 350-residue protein sequence, read N- to C-terminus: MFMNGSSLNSSALDPSEQALQRPPWVTTTLGCFLIFTIVVDILGNLLVIFSVYRNKKLQNAGNIFVVSLAVADLVVAIYPYPLVLTSIFHRGWNLGYMHCQISGFLMGVSVIGSIFNITGIAINCYCYICHSLKYDKLYSDKNSVCYVLLIWALTVLAIVPNLFVGSLQYDPRVYSCTFEQSASSAYTIAVVFFHFILPIMIVTYCYLRIWVLVIQVRRRVKNDNRPKITPHDVRNFVTMFVVFVLFAVCWAPLNFIGLAVAISPERVVPLIPEWLFVASYFMAYFNSCLNAIVYGVLNQNFRREYKRIVVSVCTARIFFGESSNEAQERLKSKPSPLMTNNNQVKVDSV.

Topologically, residues 1–29 (MFMNGSSLNSSALDPSEQALQRPPWVTTT) are extracellular. Asn4 and Asn9 each carry an N-linked (GlcNAc...) asparagine glycan. A helical membrane pass occupies residues 30-50 (LGCFLIFTIVVDILGNLLVIF). The Cytoplasmic segment spans residues 51–63 (SVYRNKKLQNAGN). The helical transmembrane segment at 64 to 84 (IFVVSLAVADLVVAIYPYPLV) threads the bilayer. The Extracellular portion of the chain corresponds to 85–101 (LTSIFHRGWNLGYMHCQ). An intrachain disulfide couples Cys100 to Cys177. The helical transmembrane segment at 102–122 (ISGFLMGVSVIGSIFNITGIA) threads the bilayer. At 123 to 144 (INCYCYICHSLKYDKLYSDKNS) the chain is on the cytoplasmic side. The chain crosses the membrane as a helical span at residues 145–165 (VCYVLLIWALTVLAIVPNLFV). Residues 166 to 187 (GSLQYDPRVYSCTFEQSASSAY) lie on the Extracellular side of the membrane. The chain crosses the membrane as a helical span at residues 188–208 (TIAVVFFHFILPIMIVTYCYL). Over 209–240 (RIWVLVIQVRRRVKNDNRPKITPHDVRNFVTM) the chain is Cytoplasmic. The chain crosses the membrane as a helical span at residues 241–261 (FVVFVLFAVCWAPLNFIGLAV). Over 262-267 (AISPER) the chain is Extracellular. A helical membrane pass occupies residues 268-288 (VVPLIPEWLFVASYFMAYFNS). The Cytoplasmic segment spans residues 289–350 (CLNAIVYGVL…NNNQVKVDSV (62 aa)).

Belongs to the G-protein coupled receptor 1 family.

It localises to the cell membrane. Its function is as follows. High affinity receptor for melatonin. The activity of this receptor is mediated by pertussis toxin sensitive G proteins that inhibits adenylate cyclase activity. This Danio rerio (Zebrafish) protein is Melatonin receptor type 1A-A (mtnr1aa).